Reading from the N-terminus, the 463-residue chain is Fumarate hydratase class II (463 aa).

Residues 98 to 100 (SGT), 129 to 132 (HPND), 139 to 141 (SSN), and Thr-187 contribute to the substrate site. His-188 functions as the Proton donor/acceptor in the catalytic mechanism. Ser-318 is an active-site residue. Substrate-binding positions include Ser-319 and 324 to 326 (KVN).

Belongs to the class-II fumarase/aspartase family. Fumarase subfamily. In terms of assembly, homotetramer.

The protein localises to the cytoplasm. It catalyses the reaction (S)-malate = fumarate + H2O. The protein operates within carbohydrate metabolism; tricarboxylic acid cycle; (S)-malate from fumarate: step 1/1. Functionally, involved in the TCA cycle. Catalyzes the stereospecific interconversion of fumarate to L-malate. This is Fumarate hydratase class II from Caulobacter vibrioides (strain ATCC 19089 / CIP 103742 / CB 15) (Caulobacter crescentus).